Reading from the N-terminus, the 245-residue chain is Ribonuclease PH (245 aa).

Residues Arg86 and 124-126 (GTR) contribute to the phosphate site.

The protein belongs to the RNase PH family. Homohexameric ring arranged as a trimer of dimers.

It carries out the reaction tRNA(n+1) + phosphate = tRNA(n) + a ribonucleoside 5'-diphosphate. In terms of biological role, phosphorolytic 3'-5' exoribonuclease that plays an important role in tRNA 3'-end maturation. Removes nucleotide residues following the 3'-CCA terminus of tRNAs; can also add nucleotides to the ends of RNA molecules by using nucleoside diphosphates as substrates, but this may not be physiologically important. Probably plays a role in initiation of 16S rRNA degradation (leading to ribosome degradation) during starvation. The protein is Ribonuclease PH of Bacillus mycoides (strain KBAB4) (Bacillus weihenstephanensis).